A 339-amino-acid chain; its full sequence is Uracil nucleotide/cysteinyl leukotriene receptor (339 aa).

Residues 1–36 lie on the Extracellular side of the membrane; it reads MNGLEAALPSLTDNSSLAYSEQCGQETPLENMLFAC. N-linked (GlcNAc...) asparagine glycosylation is present at N14. Residues 37–57 form a helical membrane-spanning segment; the sequence is FYLLDFILAFVGNALALWLFI. Over 58 to 64 the chain is Cytoplasmic; it reads WDHKSGT. Residues 65-85 form a helical membrane-spanning segment; it reads PANVFLMHLAVADLSCVLVLP. The Extracellular segment spans residues 86–105; that stretch reads TRLVYHFSGNHWPFGEIPCR. C104 and C181 form a disulfide bridge. The chain crosses the membrane as a helical span at residues 106–126; that stretch reads LTGFLFYLNMYASIYFLTCIS. Residues 127–147 are Cytoplasmic-facing; it reads ADRFLAIVHPVKSLKLRRPLY. Residues 148–168 form a helical membrane-spanning segment; that stretch reads AHLACAFLWIVVAVAMAPLLV. At 169–195 the chain is on the extracellular side; it reads SPQTVQTNHTVVCLQLYREKASHHALA. N-linked (GlcNAc...) asparagine glycosylation occurs at N176. The helical transmembrane segment at 196 to 216 threads the bilayer; the sequence is SLAVAFTFPFITTVTCYLLII. Over 217 to 232 the chain is Cytoplasmic; sequence RSLRQGPRIEKHLKNK. The helical transmembrane segment at 233-253 threads the bilayer; it reads AVRMIAMVLAIFLICFVPYHI. Residues 254–280 lie on the Extracellular side of the membrane; sequence HRSVYVLHYRGGGTSCAAQRALALGNR. Residues 281–301 traverse the membrane as a helical segment; that stretch reads ITSCLTSLNGALDPVMYFFVA. At 302-339 the chain is on the cytoplasmic side; that stretch reads EKFRHALCNLLCSKRLTGPPPSFEGKTNESSLSARSEL.

This sequence belongs to the G-protein coupled receptor 1 family.

It localises to the cell membrane. Its function is as follows. Dual specificity receptor for uracil nucleotides and cysteinyl leukotrienes (CysLTs). Signals through G(i) and inhibition of adenylyl cyclase. May mediate brain damage by nucleotides and CysLTs following ischemia. The chain is Uracil nucleotide/cysteinyl leukotriene receptor from Mus musculus (Mouse).